Here is a 356-residue protein sequence, read N- to C-terminus: Heparan sulfate 2-O-sulfotransferase 1 (356 aa).

The Cytoplasmic segment spans residues 1–11 (MGLLRIMMPPK). A helical; Signal-anchor for type II membrane protein membrane pass occupies residues 12-28 (LQLLAVVAFAVAMLFLE). Residues 24–51 (MLFLENQIQKLEESRSKLERAIARHEVR) adopt a coiled-coil conformation. Over 29-356 (NQIQKLEESR…FYEKIYPKSN (328 aa)) the chain is Lumenal. Residues K83, T84, A85, S86, T87, and S88 each contribute to the adenosine 3',5'-bisphosphate site. N108 and N127 each carry an N-linked (GlcNAc...) asparagine glycan. Active-site residues include H140 and H142. Residues R164 and S172 each contribute to the adenosine 3',5'-bisphosphate site. Cystine bridges form between C201–C209 and C222–C228. The adenosine 3',5'-bisphosphate site is built by Y279, S285, T290, and K293.

This sequence belongs to the sulfotransferase 3 family. In terms of assembly, homotrimer. Interacts with the C5-epimerase GLCE. N-glycosylated.

Its subcellular location is the golgi apparatus membrane. Functionally, catalyzes the transfer of a sulfo group from 3'-phospho-5'-adenylyl sulfate (PAPS) to the 2-OH position of iduronic acid (IdoA) or glucuronic acid (GlcA) within the heparan sulfate (HS) chain and participates in HS biosynthesis. Required for metanephric development of kidney formation, suggesting that 2-O-sulfation within HS is essential for signaling between ureteric bud and metanephric mesenchyme. This is Heparan sulfate 2-O-sulfotransferase 1 from Pongo abelii (Sumatran orangutan).